The sequence spans 886 residues: MSAAKEGKEKKPVATVVKIVEVESVSPSKDKRPTRMKLLNNLSASSPQTYPPKTDKRSGIKGSRIKILNEDVLVAPKVEKRRSTKPTSPGATATSTVKILNEKRIVPAEETALETTKIKISPPKRNKMDHYVLQPVKVENNKSASQATRGATGEDEDTIAFILGDDDEVVPASTSRSNGQEILVTEEEEEEEEDDLDEEGDSPGGSNKNSGHKAIKEIVEHVCGKCYKTFRRLMSLKKHLEFCRYDSGYHLRKAECWKNLEKIEKDGDVLEKKDICFCCCESYDTFHLGHINCPDCPKSFKTQTSYERHIFITHSEFSDYPCSICNANLRSEALLKLHEEQHKSRGKPYACKICGKDFTRSYHLKRHQKYSSCSANENDTMSCKVCDRVFYRLDNLRSHLKHHLGTQVVKKPEYMCHVCKNCFYSLSTLNIHIRTHTGEKPFDCDLCDKKLSALVALKKHRRYHTGEKPYSCTVCNQAFAVKEVLNRHMKRHTGERPHKCEECGKSFIQATQLRTHSKTHIRPFACDMCEEKFKTEKQLERHVKEHSRQKRPYFSCTECKRHFRNTAQLKQHMDAGDHSEKSGEKPQRAKRSSTKVLERTDCAICDKNFDSSETLRKHIRSVHECDPDDIFGIQPPSAKRAKINKIPKVDEEEEEEMVPVALNASSGSLISSQTDDNGVVVREFLVDEGDGTAQTITLENETYTILPLDGEIAAEQITDEGVKVEGQKTPPKKSPVVKKEKRKSLGASLAAAIADNIEVPPVEEDFEGEVLTEEDLKLKENIAKLIDMLADPPILKKYGWPNAPEEMVLCKVIENCGYDLNKGAENYAELDYGSRMREYCKLLFTVVIHNDSIKSLLNNFPIDDVIEYVLGDEDQDEDGADNGEGN.

Disordered regions lie at residues 24–62 and 167–211; these read SVSP…GIKG and DEVV…KNSG. Residues 184-201 are compositionally biased toward acidic residues; the sequence is VTEEEEEEEEDDLDEEGD. Residues 221–243 form a C2H2-type 1; atypical zinc finger; sequence HVCGKCYKTFRRLMSLKKHLEFC. The segment at 291–314 adopts a C2H2-type 2 zinc-finger fold; sequence INCPDCPKSFKTQTSYERHIFITH. The segment at 320–342 adopts a C2H2-type 3; atypical zinc-finger fold; it reads YPCSICNANLRSEALLKLHEEQH. 9 C2H2-type zinc fingers span residues 349-367, 381-403, 414-436, 442-464, 470-492, 498-520, 524-546, 554-578, and 600-623; these read YACK…LKRH, MSCK…LKHH, YMCH…IRTH, FDCD…RRYH, YSCT…MKRH, HKCE…SKTH, FACD…VKEH, FSCT…AGDH, and TDCA…RSVH. The span at 571-587 shows a compositional bias: basic and acidic residues; it reads QHMDAGDHSEKSGEKPQ. Residues 571-594 form a disordered region; it reads QHMDAGDHSEKSGEKPQRAKRSST.

It localises to the nucleus. Functionally, component of the gypsy chromatin insulator complex which is required for the function of the gypsy chromatin insulator and other endogenous chromatin insulators. Chromatin insulators are regulatory elements which establish independent domains of transcriptional activity within eukaryotic genomes. Insulators have two defining properties; they can block the communication between an enhancer and a promoter when placed between them and can also buffer transgenes from position effect variegation (PEV). Insulators are proposed to structure the chromatin fiber into independent domains of differing transcriptional potential by promoting the formation of distinct chromatin loops. This chromatin looping may involve the formation of insulator bodies, where homotypic interactions between individual subunits of the insulator complex could promote the clustering of widely spaced insulators at the nuclear periphery. Within the gypsy insulator complex, this protein binds specifically to a region of the gypsy element located 3' of the 5' long terminal repeat (LTR), and may also mediate interaction with other endogenous insulators at sites distinct from those recognized by Cp190. Cooperates with pita and cliff to recruit Cp190 and regulate insulator function at the front-ultraabdominal (Fub) boundary. The sequence is that of Protein suppressor of hairy wing (su(Hw)) from Drosophila ananassae (Fruit fly).